The chain runs to 264 residues: MNRDNINSNKTVKQEFGSFAFVICIALVIRILIMEPFTVPTGSMKATILENDYIFSTKYSYGYSNYSLSFFDFIHLFKGRVFAREPERGDIVVFRPPNDMSVRYIKRLIGLPGDKIQLIDDVIYINDKKIERTEVGTYIGEDGIKYLKFKETLPNGRTYFSYKLAPIFGVIPSDRYSNTDVFYVPEGQYFFLGDNRDRSNDSRVNLGFVPFENFIAKAQFIWFSTKITWWDNDIGIINLILKLKPWIESVRLSRIFKNLYNVDE.

Residues 1 to 18 are Cytoplasmic-facing; the sequence is MNRDNINSNKTVKQEFGS. The helical transmembrane segment at 19–39 threads the bilayer; the sequence is FAFVICIALVIRILIMEPFTV. Topologically, residues 40–264 are extracellular; that stretch reads PTGSMKATIL…IFKNLYNVDE (225 aa). Catalysis depends on residues serine 43 and lysine 106.

The protein belongs to the peptidase S26 family.

The protein resides in the cell membrane. The enzyme catalyses Cleavage of hydrophobic, N-terminal signal or leader sequences from secreted and periplasmic proteins.. The chain is Signal peptidase I (lepB) from Rickettsia prowazekii (strain Madrid E).